Consider the following 388-residue polypeptide: Succinate--CoA ligase [ADP-forming] subunit beta (388 aa).

Residues Lys9–Gln244 enclose the ATP-grasp domain. Residues Lys46, Gly53–Gly55, Glu99, Cys102, and Glu107 contribute to the ATP site. Asn199 and Asp213 together coordinate Mg(2+). Substrate contacts are provided by residues Asn264 and Gly321–Met323.

The protein belongs to the succinate/malate CoA ligase beta subunit family. As to quaternary structure, heterotetramer of two alpha and two beta subunits. It depends on Mg(2+) as a cofactor.

It carries out the reaction succinate + ATP + CoA = succinyl-CoA + ADP + phosphate. The catalysed reaction is GTP + succinate + CoA = succinyl-CoA + GDP + phosphate. It participates in carbohydrate metabolism; tricarboxylic acid cycle; succinate from succinyl-CoA (ligase route): step 1/1. Succinyl-CoA synthetase functions in the citric acid cycle (TCA), coupling the hydrolysis of succinyl-CoA to the synthesis of either ATP or GTP and thus represents the only step of substrate-level phosphorylation in the TCA. The beta subunit provides nucleotide specificity of the enzyme and binds the substrate succinate, while the binding sites for coenzyme A and phosphate are found in the alpha subunit. The polypeptide is Succinate--CoA ligase [ADP-forming] subunit beta (Anaeromyxobacter dehalogenans (strain 2CP-1 / ATCC BAA-258)).